A 487-amino-acid chain; its full sequence is PPE family protein PPE10 (487 aa).

The span at 398–424 (APVGGLDSGNPNPGSGSAAAGSGANPG) shows a compositional bias: low complexity. The segment at 398–487 (APVGGLDSGN…PRIGQPVGSE (90 aa)) is disordered. Over residues 428–446 (PGTSYPSFVNSGSNDSGLR) the composition is skewed to polar residues.

This sequence belongs to the mycobacterial PPE family.

The protein resides in the secreted. In terms of biological role, plays a major role in the integrity and stability of the capsule. This is PPE family protein PPE10 (PPE10) from Mycobacterium tuberculosis (strain CDC 1551 / Oshkosh).